Reading from the N-terminus, the 497-residue chain is Ammonium transporter Rh type C (497 aa).

The Cytoplasmic segment spans residues 1–9; sequence MAWNTNLRG. Residues 10–30 traverse the membrane as a helical segment; that stretch reads RLPITCLILQVTMVVLFGVFV. The Extracellular portion of the chain corresponds to 31 to 61; it reads RYDIQADAHWWLEKKRKNISSDVENEFYYRY. A glycan (N-linked (GlcNAc...) asparagine) is linked at Asn-48. Residues 62–82 traverse the membrane as a helical segment; that stretch reads PSFEDVHAMVFVGFGFLMTYL. Over 83–93 the chain is Cytoplasmic; that stretch reads QRYGFSAVGFN. A helical membrane pass occupies residues 94–114; that stretch reads FLLAAFGIQWALLMQGWFHFF. Residues 115–125 are Extracellular-facing; sequence EEGHILLSVEN. A helical membrane pass occupies residues 126–145; sequence LIQADFCVASTCVAFGAVLG. The Cytoplasmic segment spans residues 146–151; it reads KISPMQ. Residues 152–174 form a helical membrane-spanning segment; the sequence is LLIMTFFQVTLFTVNEFILLNLI. The Extracellular segment spans residues 175–179; it reads EAKDA. Residues 180–200 traverse the membrane as a helical segment; it reads GGSMTIHTFGAYFGLTVTWIL. The Cytoplasmic segment spans residues 201 to 219; the sequence is YRKNLEQSKQRQSSVYHSD. Residues 220-240 form a helical membrane-spanning segment; the sequence is LFAMIGTLFLWIYWPSFNSAS. Over 241–251 the chain is Extracellular; the sequence is SFHGDTQHRAA. The chain crosses the membrane as a helical span at residues 252–272; that stretch reads LNTYLSLAASVLTTVAVSSVI. Residues 273–282 are Cytoplasmic-facing; that stretch reads HKKGKLDMVH. The chain crosses the membrane as a helical span at residues 283 to 303; sequence IQNATLAGGVGVGTAAEMMLT. Position 304 (Pro-304) is a topological domain, extracellular. Residues 305–325 form a helical membrane-spanning segment; that stretch reads YGALIVGFFCGILSTLGFAYL. At 326 to 340 the chain is on the cytoplasmic side; that stretch reads SPFLESRLRIQDTCG. Residues 341–361 traverse the membrane as a helical segment; sequence IHNLHGIPGIIGGIVGAVTAA. Topologically, residues 362-395 are extracellular; sequence YSSPDVYGEPGIVHSFGFGGYKADWTKRMQGRSQ. Residues 396–416 form a helical membrane-spanning segment; it reads IFGLLLSLAMALVGGIIVGFI. At 417 to 497 the chain is on the cytoplasmic side; sequence LKLPFWGQAS…ATVTSSSLVH (81 aa).

It belongs to the ammonium transporter (TC 2.A.49) family. Rh subfamily. As to quaternary structure, homotrimer. Post-translationally, N-glycosylated. Expressed by connecting tubule cells and intercalated cells of the collecting duct in kidney (at protein level).

The protein resides in the cell membrane. Its subcellular location is the apical cell membrane. It carries out the reaction NH4(+)(in) = NH4(+)(out). It catalyses the reaction methylamine(out) = methylamine(in). The catalysed reaction is CO2(out) = CO2(in). Functionally, ammonium transporter involved in the maintenance of acid-base homeostasis. Transports ammonium and its related derivative methylammonium across the plasma membrane of epithelial cells likely contributing to renal transepithelial ammonia transport and ammonia metabolism. Postulated to primarily mediate an electroneutral bidirectional transport of NH3 ammonia species according to a mechanism that implies interaction of an NH4(+) ion with acidic residues of the pore entry followed by dissociation of NH4(+) into NH3 and H(+). As a result NH3 transits through the central pore and is protonated on the extracellular side reforming NH4(+). May act as a CO2 channel providing for renal acid secretion. The chain is Ammonium transporter Rh type C (Rhcg) from Rattus norvegicus (Rat).